We begin with the raw amino-acid sequence, 104 residues long: Pyrimidine/purine nucleoside phosphorylase (104 aa).

The protein belongs to the nucleoside phosphorylase PpnP family.

It catalyses the reaction a purine D-ribonucleoside + phosphate = a purine nucleobase + alpha-D-ribose 1-phosphate. The catalysed reaction is adenosine + phosphate = alpha-D-ribose 1-phosphate + adenine. The enzyme catalyses cytidine + phosphate = cytosine + alpha-D-ribose 1-phosphate. It carries out the reaction guanosine + phosphate = alpha-D-ribose 1-phosphate + guanine. It catalyses the reaction inosine + phosphate = alpha-D-ribose 1-phosphate + hypoxanthine. The catalysed reaction is thymidine + phosphate = 2-deoxy-alpha-D-ribose 1-phosphate + thymine. The enzyme catalyses uridine + phosphate = alpha-D-ribose 1-phosphate + uracil. It carries out the reaction xanthosine + phosphate = alpha-D-ribose 1-phosphate + xanthine. Its function is as follows. Catalyzes the phosphorolysis of diverse nucleosides, yielding D-ribose 1-phosphate and the respective free bases. Can use uridine, adenosine, guanosine, cytidine, thymidine, inosine and xanthosine as substrates. Also catalyzes the reverse reactions. This chain is Pyrimidine/purine nucleoside phosphorylase, found in Geotalea daltonii (strain DSM 22248 / JCM 15807 / FRC-32) (Geobacter daltonii).